The chain runs to 376 residues: Chaperone protein DnaJ (376 aa).

The 66-residue stretch at 5–70 (DFYEVLGVER…SKRAAYDQYG (66 aa)) folds into the J domain. A CR-type zinc finger spans residues 135–213 (GTTVTIRVPT…CHGQGRVEEQ (79 aa)). Zn(2+)-binding residues include Cys148, Cys151, Cys165, Cys168, Cys187, Cys190, Cys201, and Cys204. CXXCXGXG motif repeat units lie at residues 148–155 (CKTCDGSG), 165–172 (CTTCGGIG), 187–194 (CPRCHGSG), and 201–208 (CGSCHGQG).

Belongs to the DnaJ family. In terms of assembly, homodimer. It depends on Zn(2+) as a cofactor.

The protein localises to the cytoplasm. Functionally, participates actively in the response to hyperosmotic and heat shock by preventing the aggregation of stress-denatured proteins and by disaggregating proteins, also in an autonomous, DnaK-independent fashion. Unfolded proteins bind initially to DnaJ; upon interaction with the DnaJ-bound protein, DnaK hydrolyzes its bound ATP, resulting in the formation of a stable complex. GrpE releases ADP from DnaK; ATP binding to DnaK triggers the release of the substrate protein, thus completing the reaction cycle. Several rounds of ATP-dependent interactions between DnaJ, DnaK and GrpE are required for fully efficient folding. Also involved, together with DnaK and GrpE, in the DNA replication of plasmids through activation of initiation proteins. The protein is Chaperone protein DnaJ of Stutzerimonas stutzeri (Pseudomonas stutzeri).